The following is a 397-amino-acid chain: Odorant receptor 85a (397 aa).

Over 1 to 46 (MIFKYIQEPVLGSLFRSRDSLIYLNRSIDQMGWRLPPRTKPYWWLY) the chain is Cytoplasmic. A helical transmembrane segment spans residues 47–67 (YIWTLVVIVLVFIFIPYGLIM). The Extracellular portion of the chain corresponds to 68–83 (TGIKEFKNFTTTDLFT). N-linked (GlcNAc...) asparagine glycosylation is present at N75. A helical transmembrane segment spans residues 84–104 (YVQVPVNTNASIMKGIIVLFM). Residues 105–142 (RRRFSRAQKMMDAMDIRCTKMEEKVQVHRAAALCNRVV) are Cytoplasmic-facing. The chain crosses the membrane as a helical span at residues 143–163 (VIYHCIYFGYLSMALTGALVI). Over 164–192 (GKTPFCLYNPLVNPDDHFYLATAIESVTM) the chain is Extracellular. A helical membrane pass occupies residues 193 to 213 (AGIILANLILDVYPIIYVVVL). At 214-262 (RIHMELLSERIKTLRTDVEKGDDQHYAELVECVKDHKLIVEYGNTLRPM) the chain is on the cytoplasmic side. Residues 263–283 (ISATMFIQLLSVGLLLGLAAV) form a helical membrane-spanning segment. Topologically, residues 284–294 (SMQFYNTVMER) are extracellular. The helical transmembrane segment at 295 to 315 (VVSGVYTIAILSQTFPFCYVC) threads the bilayer. Over 316-347 (EQLSSDCESLTNTLFHSKWIGAERRYRTTMLY) the chain is Cytoplasmic. A helical transmembrane segment spans residues 348 to 368 (FIHNVQQSILFTAGGIFPICL). The Extracellular segment spans residues 369 to 397 (NTNIKMAKFAFSVVTIVNEMDLAEKLRRE).

The protein belongs to the insect chemoreceptor superfamily. Heteromeric odorant receptor channel (TC 1.A.69) family. Or2a subfamily. Interacts with Orco. Complexes exist early in the endomembrane system in olfactory sensory neurons (OSNs), coupling these complexes to the conserved ciliary trafficking pathway. Expressed in olfactory sensory neurons in the antenna.

The protein resides in the cell membrane. Odorant receptor which mediates acceptance or avoidance behavior, depending on its substrates. The odorant receptor repertoire encodes a large collection of odor stimuli that vary widely in identity, intensity, and duration. May form a complex with Orco to form odorant-sensing units, providing sensitive and prolonged odorant signaling and calcium permeability. The polypeptide is Odorant receptor 85a (Or85a) (Drosophila melanogaster (Fruit fly)).